The primary structure comprises 73 residues: Protein kish (73 aa).

Positions 1 to 21 are cleaved as a signal peptide; sequence MTAIFNFESLLFVILLTICTC. Topologically, residues 22 to 52 are lumenal; the sequence is TYLHRQFPALLEKRKEGVTMVFWKCARIGER. A helical transmembrane segment spans residues 53-73; the sequence is ASPYISLFCVFMALRFIFGSS.

It belongs to the KISH family.

It localises to the golgi apparatus membrane. The protein resides in the endoplasmic reticulum membrane. Involved in the early part of the secretory pathway. This chain is Protein kish (ksh1), found in Schizosaccharomyces pombe (strain 972 / ATCC 24843) (Fission yeast).